The following is a 285-amino-acid chain: Protease HtpX homolog (285 aa).

The next 2 helical transmembrane spans lie at 7-27 (TAML…MIGG) and 30-50 (GMTI…WFSD). Position 131 (H131) interacts with Zn(2+). Residue E132 is part of the active site. Residue H135 coordinates Zn(2+). The next 2 helical transmembrane spans lie at 146-166 (ISAT…FFGG) and 177-197 (IAGI…QMAI). Position 202 (E202) interacts with Zn(2+).

This sequence belongs to the peptidase M48B family. It depends on Zn(2+) as a cofactor.

The protein localises to the cell inner membrane. The protein is Protease HtpX homolog of Burkholderia mallei (strain NCTC 10247).